We begin with the raw amino-acid sequence, 506 residues long: ATP synthase subunit alpha (506 aa).

170 to 177 (GDRQTGKT) provides a ligand contact to ATP.

It belongs to the ATPase alpha/beta chains family. As to quaternary structure, F-type ATPases have 2 components, CF(1) - the catalytic core - and CF(0) - the membrane proton channel. CF(1) has five subunits: alpha(3), beta(3), gamma(1), delta(1), epsilon(1). CF(0) has four main subunits: a(1), b(1), b'(1) and c(9-12).

Its subcellular location is the cellular thylakoid membrane. It catalyses the reaction ATP + H2O + 4 H(+)(in) = ADP + phosphate + 5 H(+)(out). In terms of biological role, produces ATP from ADP in the presence of a proton gradient across the membrane. The alpha chain is a regulatory subunit. The sequence is that of ATP synthase subunit alpha from Synechococcus sp. (strain JA-3-3Ab) (Cyanobacteria bacterium Yellowstone A-Prime).